A 325-amino-acid polypeptide reads, in one-letter code: MTATVKDELSRLRVAKPCCRRAEMAALLRFGGGLHIVGGRIVVEAELDTGATARRLRREVAEVFGFPSTVAVLAAGGLRRSVRYIVRVERDGEQLARSTGLLDQRGRPVRGLPPQVVTGSACDAAAAWRGAFLAHGSLTEPGRSCSLEVTSPGPEAALALVGAARRLGVQAKSRDVRGVDRVVIRDGDAIGALLTKIGAHDSLMAWEERRMRREVRATANRLANFDDANLRRSARAAVAAGARVQAAMRILGDDAPEHLLAAGRLRLEHAQASLEELGALADPPLTKDAVAGRIRRLLALADKRANALGIPNTEASVSPDLLENA.

Residues 273-306 (SLEELGALADPPLTKDAVAGRIRRLLALADKRAN) constitute a DNA-binding region (H-T-H motif).

Belongs to the WhiA family.

Functionally, involved in cell division and chromosome segregation. The protein is Probable cell division protein WhiA of Frankia alni (strain DSM 45986 / CECT 9034 / ACN14a).